Consider the following 938-residue polypeptide: ATP-dependent 6-phosphofructokinase subunit beta (938 aa).

Residues 1–552 (MTQSLPLLNG…HLDNFMAINS (552 aa)) form an N-terminal catalytic PFK domain 1 region. ATP contacts are provided by residues G185, 249-250 (RC), and 279-282 (GDGS). Position 280 (D280) interacts with Mg(2+). Beta-D-fructose 6-phosphate is bound by residues 325-327 (SID), R362, 369-371 (MGR), E426, R454, and 460-463 (HVQR). D327 (proton acceptor) is an active-site residue. Residues 553 to 566 (ADHIEPKLPEHTHM) are interdomain linker. A C-terminal regulatory PFK domain 2 region spans residues 567–938 (KIAIVNVGAP…ADHLVGRKKL (372 aa)). Beta-D-fructose 2,6-bisphosphate contacts are provided by residues R637, 695–699 (TLSNN), R733, 740–742 (QGG), K826, 832–835 (HVQQ), and R915.

It belongs to the phosphofructokinase type A (PFKA) family. ATP-dependent PFK group I subfamily. Eukaryotic two domain clade 'E' sub-subfamily. Heterooctamer of 4 alpha and 4 beta chains. The cofactor is Mg(2+).

The protein localises to the cytoplasm. It carries out the reaction beta-D-fructose 6-phosphate + ATP = beta-D-fructose 1,6-bisphosphate + ADP + H(+). Its pathway is carbohydrate degradation; glycolysis; D-glyceraldehyde 3-phosphate and glycerone phosphate from D-glucose: step 3/4. Allosterically activated by ADP, AMP, or fructose 2,6-bisphosphate, and allosterically inhibited by ATP or citrate. Functionally, catalyzes the phosphorylation of D-fructose 6-phosphate to fructose 1,6-bisphosphate by ATP, the first committing step of glycolysis. This chain is ATP-dependent 6-phosphofructokinase subunit beta (PFK2), found in Kluyveromyces lactis (strain ATCC 8585 / CBS 2359 / DSM 70799 / NBRC 1267 / NRRL Y-1140 / WM37) (Yeast).